We begin with the raw amino-acid sequence, 259 residues long: Ribosomal RNA small subunit methyltransferase A (259 aa).

S-adenosyl-L-methionine-binding residues include Asn13, Thr15, Gly40, Glu61, Asp85, and Asn105.

Belongs to the class I-like SAM-binding methyltransferase superfamily. rRNA adenine N(6)-methyltransferase family. RsmA subfamily.

The protein localises to the cytoplasm. The catalysed reaction is adenosine(1518)/adenosine(1519) in 16S rRNA + 4 S-adenosyl-L-methionine = N(6)-dimethyladenosine(1518)/N(6)-dimethyladenosine(1519) in 16S rRNA + 4 S-adenosyl-L-homocysteine + 4 H(+). In terms of biological role, specifically dimethylates two adjacent adenosines (A1518 and A1519) in the loop of a conserved hairpin near the 3'-end of 16S rRNA in the 30S particle. May play a critical role in biogenesis of 30S subunits. The polypeptide is Ribosomal RNA small subunit methyltransferase A (Mycoplasma genitalium (strain ATCC 33530 / DSM 19775 / NCTC 10195 / G37) (Mycoplasmoides genitalium)).